Here is a 343-residue protein sequence, read N- to C-terminus: Dihydroorotate dehydrogenase (quinone) (343 aa).

FMN contacts are provided by residues 65 to 69 (AGFDK) and Thr-89. Residue Lys-69 coordinates substrate. 114–118 (NRMGF) serves as a coordination point for substrate. FMN-binding residues include Asn-145 and Asn-178. Asn-178 contributes to the substrate binding site. The active-site Nucleophile is Ser-181. Substrate is bound at residue Asn-183. The FMN site is built by Lys-215 and Thr-243. 244-245 (NT) lines the substrate pocket. FMN-binding positions include Gly-269, Gly-298, and 319–320 (YT).

Belongs to the dihydroorotate dehydrogenase family. Type 2 subfamily. In terms of assembly, monomer. It depends on FMN as a cofactor.

The protein localises to the cell membrane. It catalyses the reaction (S)-dihydroorotate + a quinone = orotate + a quinol. It functions in the pathway pyrimidine metabolism; UMP biosynthesis via de novo pathway; orotate from (S)-dihydroorotate (quinone route): step 1/1. Its function is as follows. Catalyzes the conversion of dihydroorotate to orotate with quinone as electron acceptor. The protein is Dihydroorotate dehydrogenase (quinone) of Leifsonia xyli subsp. xyli (strain CTCB07).